A 510-amino-acid chain; its full sequence is GMP synthase [glutamine-hydrolyzing] (510 aa).

Positions 5-195 constitute a Glutamine amidotransferase type-1 domain; the sequence is MIVVLDFGSQ…VFEVCGCRGD (191 aa). Residue C82 is the Nucleophile of the active site. Active-site residues include H169 and E171. The region spanning 196-385 is the GMPS ATP-PPase domain; sequence WTMENFIDEQ…LGIPDEIVWR (190 aa). Residue 223 to 229 coordinates ATP; sequence SGGVDSS.

In terms of assembly, homodimer.

It carries out the reaction XMP + L-glutamine + ATP + H2O = GMP + L-glutamate + AMP + diphosphate + 2 H(+). The protein operates within purine metabolism; GMP biosynthesis; GMP from XMP (L-Gln route): step 1/1. In terms of biological role, catalyzes the synthesis of GMP from XMP. The sequence is that of GMP synthase [glutamine-hydrolyzing] from Geobacillus kaustophilus (strain HTA426).